A 361-amino-acid chain; its full sequence is Phospho-N-acetylmuramoyl-pentapeptide-transferase (361 aa).

11 helical membrane passes run 10 to 30 (PGTG…ACLI), 40 to 60 (LSLP…IGVP), 84 to 104 (GTPT…GSLV), 107 to 127 (GDPR…IGGI), 147 to 167 (LLLQ…HGAI), 175 to 195 (WGWL…VFLA), 206 to 226 (LDGL…LQLM), 232 to 252 (GDPA…GFLL), 260 to 280 (VFMG…IALL), 288 to 308 (LLMG…VWVF), and 341 to 361 (VVVS…VLVP).

The protein belongs to the glycosyltransferase 4 family. MraY subfamily. Mg(2+) serves as cofactor.

It localises to the cell inner membrane. The catalysed reaction is UDP-N-acetyl-alpha-D-muramoyl-L-alanyl-gamma-D-glutamyl-meso-2,6-diaminopimeloyl-D-alanyl-D-alanine + di-trans,octa-cis-undecaprenyl phosphate = di-trans,octa-cis-undecaprenyl diphospho-N-acetyl-alpha-D-muramoyl-L-alanyl-D-glutamyl-meso-2,6-diaminopimeloyl-D-alanyl-D-alanine + UMP. The protein operates within cell wall biogenesis; peptidoglycan biosynthesis. Its function is as follows. Catalyzes the initial step of the lipid cycle reactions in the biosynthesis of the cell wall peptidoglycan: transfers peptidoglycan precursor phospho-MurNAc-pentapeptide from UDP-MurNAc-pentapeptide onto the lipid carrier undecaprenyl phosphate, yielding undecaprenyl-pyrophosphoryl-MurNAc-pentapeptide, known as lipid I. This chain is Phospho-N-acetylmuramoyl-pentapeptide-transferase, found in Synechococcus sp. (strain RCC307).